Here is a 384-residue protein sequence, read N- to C-terminus: Galactokinase (384 aa).

34 to 37 serves as a coordination point for substrate; sequence EHTD. Position 123-129 (123-129) interacts with ATP; the sequence is SSGLSSS. Mg(2+) is bound by residues S129 and E161. The active-site Proton acceptor is the D173. Residue Y222 participates in substrate binding.

Belongs to the GHMP kinase family. GalK subfamily.

It localises to the cytoplasm. It carries out the reaction alpha-D-galactose + ATP = alpha-D-galactose 1-phosphate + ADP + H(+). Its pathway is carbohydrate metabolism; galactose metabolism. Its function is as follows. Catalyzes the transfer of the gamma-phosphate of ATP to D-galactose to form alpha-D-galactose-1-phosphate (Gal-1-P). This chain is Galactokinase, found in Glaesserella parasuis serovar 5 (strain SH0165) (Haemophilus parasuis).